Consider the following 122-residue polypeptide: Nodulation protein NolR (122 aa).

The HTH arsR-type domain maps to 15-109 (EKHEDAEIAA…ALSDIYGDDT (95 aa)). Positions 49–68 (VGALAHKVGLSQSALSQHLS) form a DNA-binding region, H-T-H motif.

Binds to the operator site in homodimeric form.

In terms of biological role, negative transacting factor controlling the nod regulon. May control the expression of nodD1, nodD2, nodD3 and nodABC genes. The chain is Nodulation protein NolR (nolR) from Rhizobium meliloti (Ensifer meliloti).